A 315-amino-acid polypeptide reads, in one-letter code: Transcription initiation factor IIB (315 aa).

A TFIIB-type zinc finger spans residues 10-41 (NKVCCYAHPESPLIEDYRAGDMICSECGLVVG). Zn(2+) contacts are provided by Cys-14, His-17, Cys-33, and Cys-36. Repeat copies occupy residues 123 to 199 (MADR…LTLK) and 217 to 293 (FCAN…LMYP).

It belongs to the TFIIB family. As to quaternary structure, belongs to the TFIID complex which is composed of TATA binding protein (Tbp) and a number of TBP-associated factors (Tafs). Associates with TFIID-IIA (DA complex) to form TFIID-IIA-IIB (DAB-complex) which is then recognized by polymerase II.

It localises to the nucleus. Its function is as follows. General factor that plays a major role in the activation of eukaryotic genes transcribed by RNA polymerase II. The protein is Transcription initiation factor IIB (TfIIB) of Drosophila melanogaster (Fruit fly).